Reading from the N-terminus, the 98-residue chain is Large ribosomal subunit protein bL27 (98 aa).

Residues 1–13 (MKKIWFHLDLQFF) constitute a propeptide that is removed on maturation.

It belongs to the bacterial ribosomal protein bL27 family. Post-translationally, the N-terminus is cleaved by ribosomal processing cysteine protease Prp.

The protein is Large ribosomal subunit protein bL27 of Mycoplasmoides gallisepticum (strain R(low / passage 15 / clone 2)) (Mycoplasma gallisepticum).